An 887-amino-acid polypeptide reads, in one-letter code: Pyruvate dehydrogenase E1 component (887 aa).

As to quaternary structure, homodimer. Part of the PDH complex, consisting of multiple copies of pyruvate dehydrogenase (E1), dihydrolipoamide acetyltransferase (E2) and lipoamide dehydrogenase (E3). Requires thiamine diphosphate as cofactor.

It carries out the reaction N(6)-[(R)-lipoyl]-L-lysyl-[protein] + pyruvate + H(+) = N(6)-[(R)-S(8)-acetyldihydrolipoyl]-L-lysyl-[protein] + CO2. In terms of biological role, component of the pyruvate dehydrogenase (PDH) complex, that catalyzes the overall conversion of pyruvate to acetyl-CoA and CO(2). In Buchnera aphidicola subsp. Acyrthosiphon pisum (strain APS) (Acyrthosiphon pisum symbiotic bacterium), this protein is Pyruvate dehydrogenase E1 component (aceE).